The primary structure comprises 368 residues: Chaperone protein DnaJ (368 aa).

A J domain is found at 5–70; that stretch reads DYYQVLGVPR…KKRKLYDTHG (66 aa). Residues 124–201 form a CR-type zinc finger; it reads GVERQIQIPT…CNGAGRVEDH (78 aa). 8 residues coordinate Zn(2+): Cys-137, Cys-140, Cys-153, Cys-156, Cys-175, Cys-178, Cys-189, and Cys-192. CXXCXGXG motif repeat units follow at residues 137–144, 153–160, 175–182, and 189–196; these read CTHCHGSG, CGTCRGSG, CPHCGGRG, and CKVCNGAG.

Belongs to the DnaJ family. Homodimer. It depends on Zn(2+) as a cofactor.

The protein resides in the cytoplasm. Functionally, participates actively in the response to hyperosmotic and heat shock by preventing the aggregation of stress-denatured proteins and by disaggregating proteins, also in an autonomous, DnaK-independent fashion. Unfolded proteins bind initially to DnaJ; upon interaction with the DnaJ-bound protein, DnaK hydrolyzes its bound ATP, resulting in the formation of a stable complex. GrpE releases ADP from DnaK; ATP binding to DnaK triggers the release of the substrate protein, thus completing the reaction cycle. Several rounds of ATP-dependent interactions between DnaJ, DnaK and GrpE are required for fully efficient folding. Also involved, together with DnaK and GrpE, in the DNA replication of plasmids through activation of initiation proteins. The sequence is that of Chaperone protein DnaJ from Xylella fastidiosa (strain 9a5c).